We begin with the raw amino-acid sequence, 1014 residues long: RNA-directed RNA polymerase (1014 aa).

The 123-residue stretch at 618–740 (HELEEGDYTC…ANHQGEFHSY (123 aa)) folds into the RdRp catalytic domain. The disordered stretch occupies residues 918–1014 (KEEDERQPET…TLVFKNSSLS (97 aa)). The segment covering 956–967 (KGKRKVKGRRPR) has biased composition (basic residues).

The protein belongs to the nodaviridae RNA polymerase family.

It catalyses the reaction RNA(n) + a ribonucleoside 5'-triphosphate = RNA(n+1) + diphosphate. RNA-dependent RNA polymerase which replicates the viral genome composed of 2 RNA segments, RNA1 and RNA2. This is RNA-directed RNA polymerase from Pieris rapae (Small white butterfly).